Consider the following 205-residue polypeptide: Transcription termination/antitermination protein NusG (205 aa).

The 25-residue stretch at 154–178 (GDHIMVLSGPFKDFEGDVIEVSPER) folds into the KOW domain.

This sequence belongs to the NusG family.

Functionally, participates in transcription elongation, termination and antitermination. This is Transcription termination/antitermination protein NusG from Synechocystis sp. (strain ATCC 27184 / PCC 6803 / Kazusa).